A 681-amino-acid chain; its full sequence is MELLYQLAWLIPVLPLFGATVVGIGLISFNQATNKLRQINAVFIISCLGAALVMSGALLWDQIQGHASYAQMIEWASAGSFHLEMGYVIDHLSALMLVIVTSVALLVMIYTDGYMAHDPGYVRFYAYLSLFASSMLGLVISPNLVQVYIFWELVGMCSYLLIGFWYDRKAAADACQKAFVTNRVGDFGLLLGILGLYWATGSFDFGTIGERLEGLVSSGVLSGAIAAILAILVFLGPVAKSAQFPLHVWLPDAMEGPTPISALIHAATMVAAGVFLVARMYPVFEPIPVVMNTIAFTGCFTAFLGATIALTQNDIKKGLAYSTISQLGYMVMAMGIGAYSAGLFHLMTHAYFKAMLFLCSGSVIHGMEGVVGHDPILAQDMRIMGGLRKYMPITATCFLIGTLAICGIPPFAGFWSKDEILGLAFQANPLLWFVGWATAGMTAFYMFRMYFMTFEGGFRGNDQEAKDGVLQFYGLLPNFGPGAMNVKELDHEAGHDDHGHSSEPHESPLTMTFPLMALAVPSVLIGLLGRPWANQFEAFIHAPGEVVEHAAEFEWGEFYVMAGNSIGIALIGITVASLMYWQHKFDPKVLAEKFPSLYQLSLNKWYFDDLYDKLFVQGSRRVARQIMEVDYKVIDGAVNLTGLVTLVSGEGLKYLENGRAQFYALIVFGAVLGFVIVFSLT.

16 consecutive transmembrane segments (helical) span residues 7–27 (LAWL…IGLI), 39–59 (INAV…GALL), 89–109 (IDHL…LVMI), 120–140 (GYVR…GLVI), 144–164 (LVQV…LIGF), 188–208 (GLLL…FGTI), 219–239 (GVLS…GPVA), 258–278 (TPIS…FLVA), 289–309 (VVMN…ATIA), 327–347 (LGYM…FHLM), 352–372 (FKAM…GVVG), 395–415 (ATCF…AGFW), 420–440 (ILGL…ATAG), 509–529 (LTMT…GLLG), 558–578 (FYVM…VASL), and 660–680 (AQFY…VFSL).

It belongs to the complex I subunit 5 family.

Its subcellular location is the cell membrane. It carries out the reaction a plastoquinone + NADH + (n+1) H(+)(in) = a plastoquinol + NAD(+) + n H(+)(out). The catalysed reaction is a plastoquinone + NADPH + (n+1) H(+)(in) = a plastoquinol + NADP(+) + n H(+)(out). Its function is as follows. NDH-1 shuttles electrons from NAD(P)H, via FMN and iron-sulfur (Fe-S) centers, to quinones in the respiratory chain. The immediate electron acceptor for the enzyme in this species is believed to be plastoquinone. Couples the redox reaction to proton translocation (for every two electrons transferred, four hydrogen ions are translocated across the cytoplasmic membrane), and thus conserves the redox energy in a proton gradient. The chain is NAD(P)H-quinone oxidoreductase chain 5 (ndhF) from Synechocystis sp. (strain ATCC 27184 / PCC 6803 / Kazusa).